A 345-amino-acid chain; its full sequence is Protein sdf-9 (345 aa).

Positions 33–284 (NRNRVVKIVP…SFIYEAVLDY (252 aa)) constitute a Tyrosine-protein phosphatase domain.

This sequence belongs to the protein-tyrosine phosphatase family. Expressed in the 2 embryonic head hypodermal cells XXXL/R.

The protein resides in the cytoplasm. The protein localises to the cell membrane. Together with eak-4 and phosphatase eak-6, negatively regulates dauer larva formation downstream of insulin-like receptor daf-2 and in parallel of age-1, pdk-1 and akt-1. The sequence is that of Protein sdf-9 from Caenorhabditis elegans.